We begin with the raw amino-acid sequence, 203 residues long: Imidazoleglycerol-phosphate dehydratase (203 aa).

It belongs to the imidazoleglycerol-phosphate dehydratase family.

Its subcellular location is the cytoplasm. It catalyses the reaction D-erythro-1-(imidazol-4-yl)glycerol 3-phosphate = 3-(imidazol-4-yl)-2-oxopropyl phosphate + H2O. It functions in the pathway amino-acid biosynthesis; L-histidine biosynthesis; L-histidine from 5-phospho-alpha-D-ribose 1-diphosphate: step 6/9. The chain is Imidazoleglycerol-phosphate dehydratase from Synechococcus sp. (strain RCC307).